The following is a 235-amino-acid chain: Proteasome subunit alpha (235 aa).

It belongs to the peptidase T1A family. As to quaternary structure, the 20S proteasome core is composed of 14 alpha and 14 beta subunits that assemble into four stacked heptameric rings, resulting in a barrel-shaped structure. The two inner rings, each composed of seven catalytic beta subunits, are sandwiched by two outer rings, each composed of seven alpha subunits. The catalytic chamber with the active sites is on the inside of the barrel. Has a gated structure, the ends of the cylinder being occluded by the N-termini of the alpha-subunits. Is capped by the proteasome-associated ATPase, ARC.

It is found in the cytoplasm. It functions in the pathway protein degradation; proteasomal Pup-dependent pathway. With respect to regulation, the formation of the proteasomal ATPase ARC-20S proteasome complex, likely via the docking of the C-termini of ARC into the intersubunit pockets in the alpha-rings, may trigger opening of the gate for substrate entry. Interconversion between the open-gate and close-gate conformations leads to a dynamic regulation of the 20S proteasome proteolysis activity. Functionally, component of the proteasome core, a large protease complex with broad specificity involved in protein degradation. In Paenarthrobacter aurescens (strain TC1), this protein is Proteasome subunit alpha.